An 874-amino-acid chain; its full sequence is Cellulose synthase catalytic subunit [UDP-forming] (874 aa).

4 helical membrane-spanning segments follow: residues 30–50 (SPFS…VFPL), 151–171 (ILGV…TQPF), 173–193 (PLSQ…VRRM), and 230–250 (LVCG…LVLG). Positions 271-364 (QWPTVDIFVP…FVAIFDCDHV (94 aa)) are catalytic subdomain A. The active site involves aspartate 313. Positions 360 and 362 each coordinate substrate. A catalytic subdomain B region spans residues 441–501 (KPLDEIGGIA…GQRIRWARGM (61 aa)). Residue aspartate 457 is part of the active site. 5 consecutive transmembrane segments (helical) span residues 525 to 545 (LNAM…TAPL), 547 to 567 (FLLL…LFVI), 592 to 612 (IYET…LINP), 634 to 654 (VISR…AAGV), and 668 to 688 (VIVS…AVAV). In terms of domain architecture, PilZ spans 694 to 790 (QVRRAHRVEI…QHIDFVQCTF (97 aa)). A helical transmembrane segment spans residues 833–853 (SVKVIFRSLTALIAWIVSFIP).

This sequence belongs to the glycosyltransferase 2 family. Mg(2+) serves as cofactor.

The protein localises to the cell inner membrane. The catalysed reaction is [(1-&gt;4)-beta-D-glucosyl](n) + UDP-alpha-D-glucose = [(1-&gt;4)-beta-D-glucosyl](n+1) + UDP + H(+). It functions in the pathway glycan metabolism; bacterial cellulose biosynthesis. Its activity is regulated as follows. Activated by bis-(3'-5') cyclic diguanylic acid (c-di-GMP). Its function is as follows. Catalytic subunit of cellulose synthase. It polymerizes uridine 5'-diphosphate glucose to cellulose, which is produced as an extracellular component for mechanical and chemical protection at the onset of the stationary phase, when the cells exhibit multicellular behavior (rdar morphotype). Coexpression of cellulose and thin aggregative fimbriae leads to a hydrophobic network with tightly packed cells embedded in a highly inert matrix. The sequence is that of Cellulose synthase catalytic subunit [UDP-forming] (bcsA) from Salmonella typhimurium (strain LT2 / SGSC1412 / ATCC 700720).